Reading from the N-terminus, the 130-residue chain is Small ribosomal subunit protein uS11 (130 aa).

The protein belongs to the universal ribosomal protein uS11 family. As to quaternary structure, part of the 30S ribosomal subunit. Interacts with proteins S7 and S18. Binds to IF-3.

Functionally, located on the platform of the 30S subunit, it bridges several disparate RNA helices of the 16S rRNA. Forms part of the Shine-Dalgarno cleft in the 70S ribosome. The sequence is that of Small ribosomal subunit protein uS11 from Campylobacter lari (strain RM2100 / D67 / ATCC BAA-1060).